Here is a 301-residue protein sequence, read N- to C-terminus: Homeobox protein knotted-1-like 1 (301 aa).

A disordered region spans residues 141–170 (CSGATSPPATTATHSDEMVGSSDEDQCSGE). Residues 144 to 153 (ATSPPATTAT) are compositionally biased toward low complexity. Residues 188-208 (ELKEMLLKKYSGCLSRLRSEF) enclose the ELK domain. Residues 209–272 (LKKRKKGKLP…NQRKRHWKPS (64 aa)) constitute a DNA-binding region (homeobox; TALE-type).

Belongs to the TALE/KNOX homeobox family.

The protein resides in the nucleus. In terms of biological role, probable transcription factor that may be involved in shoot formation during early embryogenesis. The sequence is that of Homeobox protein knotted-1-like 1 (OSH6) from Oryza sativa subsp. japonica (Rice).